Reading from the N-terminus, the 955-residue chain is Kinesin-like protein K39 (955 aa).

One can recognise a Kinesin motor domain in the interval 12–392; the sequence is RVKVSVRVRP…LRYASRARDI (381 aa). Residue 122-129 coordinates ATP; the sequence is GQTGSGKT. Residues 426-955 are a coiled coil; it reads PAYVSELKKK…EERAAELASQ (530 aa). 2 disordered regions span residues 682–712 and 725–955; these read ELDA…RESE and TAAA…LASQ. 7 tandem repeats follow at residues 704–742, 743–781, 782–820, 821–859, 860–898, 899–937, and 938–955. The interval 704–955 is 7 X 39 AA approximate tandem repeats; sequence LEQQLRESEE…EERAAELASQ (252 aa). 5 stretches are compositionally biased toward basic and acidic residues: residues 785–794, 824–833, 863–872, 902–911, and 941–955; these read QLRDSEERAA, QLRESEERAA, and QLRD…LASQ.

It belongs to the TRAFAC class myosin-kinesin ATPase superfamily. Kinesin family.

It is found in the cytoplasm. It localises to the cytoskeleton. The sequence is that of Kinesin-like protein K39 (KIN) from Leishmania chagasi.